Reading from the N-terminus, the 279-residue chain is Calcium-activated potassium channel subunit beta-3 (279 aa).

The Cytoplasmic segment spans residues 1–60; that stretch reads MDFSPSSELGFHFVAFILLTRHRTAFPASGKKRETDYSDGDPLDVHKRLPSSAGEDRAVM. Residues 61-81 traverse the membrane as a helical segment; sequence LGFAMMGFSVLMFFLLGTTIL. Over 82 to 207 the chain is Extracellular; that stretch reads KPFMLSIQRE…DVILIKKYDQ (126 aa). The N-linked (GlcNAc...) asparagine glycan is linked to asparagine 131. A helical transmembrane segment spans residues 208-228; sequence MAIFHCLFWPSLTLLGGALIV. Residues 229-279 are Cytoplasmic-facing; sequence GMVRLTQHLSLLCEKYSTVVRDEVGGKVPYIEQHQFKLCIMRRSKGRAEKS.

The protein belongs to the KCNMB (TC 8.A.14.1) family. KCNMB3 subfamily. In terms of assembly, interacts with KCNMA1 tetramer. There are probably 4 molecules of KCMNB3 per KCNMA1 tetramer. N-glycosylated. Post-translationally, the extracellular domain contains disulfide bond essential for the gating mechanism. In terms of tissue distribution, isoform 1, isoform 3 and isoform 4 are widely expressed. Isoform 2 is expressed placenta, pancreas, kidney and heart. Isoform 1 and isoform 3 are highly expressed in pancreas and testis.

Its subcellular location is the membrane. Its function is as follows. Regulatory subunit of the calcium activated potassium KCNMA1 (maxiK) channel. Modulates the calcium sensitivity and gating kinetics of KCNMA1, thereby contributing to KCNMA1 channel diversity. Alters the functional properties of the current expressed by the KCNMA1 channel. Isoform 2, isoform 3 and isoform 4 partially inactivate the current of KCNBMA. Isoform 4 induces a fast and incomplete inactivation of KCNMA1 channel that is detectable only at large depolarizations. In contrast, isoform 1 does not induce detectable inactivation of KCNMA1. Two or more subunits of KCNMB3 are required to block the KCNMA1 tetramer. This is Calcium-activated potassium channel subunit beta-3 (KCNMB3) from Homo sapiens (Human).